Reading from the N-terminus, the 194-residue chain is Xanthine phosphoribosyltransferase (194 aa).

Xanthine-binding residues include Leu-20 and Asn-27. 128–132 (ANGQA) lines the 5-phospho-alpha-D-ribose 1-diphosphate pocket. Lys-156 lines the xanthine pocket.

Belongs to the purine/pyrimidine phosphoribosyltransferase family. Xpt subfamily. As to quaternary structure, homodimer.

It localises to the cytoplasm. The catalysed reaction is XMP + diphosphate = xanthine + 5-phospho-alpha-D-ribose 1-diphosphate. Its pathway is purine metabolism; XMP biosynthesis via salvage pathway; XMP from xanthine: step 1/1. In terms of biological role, converts the preformed base xanthine, a product of nucleic acid breakdown, to xanthosine 5'-monophosphate (XMP), so that it can be reused for RNA or DNA synthesis. This chain is Xanthine phosphoribosyltransferase (xpt), found in Bacillus subtilis (strain 168).